We begin with the raw amino-acid sequence, 85 residues long: F(1)-ATPase inhibitor IF(1), mitochondrial (85 aa).

The transit peptide at 1–22 (MLPRSALARSLQLQRGVAARFY) directs the protein to the mitochondrion. The stretch at 41 to 84 (KRERATEDFFVRQREKEQLRHLKEQLEKQRKKIDSLENKIDSMT) forms a coiled coil.

It belongs to the ATPase inhibitor family. As to quaternary structure, monomer and homodimer. The protein aggregates less strongly with increasing pH.

The protein localises to the mitochondrion. Endogenous ATPase inhibitor, which inhibits specifically the reverse ATPase reaction of mitochondrial F(1)F(0)-type ATP synthase. It limits ATP depletion when the mitochondrial membrane potential falls below a threshold and the F(1)F(0)-ATP synthase starts hydrolyzing ATP to pump protons out of the mitochondrial matrix. Required to avoid the consumption of cellular ATP when the F(1)F(0)-ATP synthase enzyme acts as an ATP hydrolase. Functions through inserting its N-terminal part into the catalytically active F1-ATPase, thereby blocking its rotational movement and subsequently the ATP hydrolase activity. The polypeptide is F(1)-ATPase inhibitor IF(1), mitochondrial (INH1) (Saccharomyces cerevisiae (strain ATCC 204508 / S288c) (Baker's yeast)).